A 749-amino-acid polypeptide reads, in one-letter code: Signal transducer and activator of transcription 4 (749 aa).

The 96-residue stretch at 570-665 (WIDGYIMGFV…ENPLKYLYPD (96 aa)) folds into the SH2 domain. Lysine 668 bears the N6-acetyllysine mark. A Phosphotyrosine; by JAK modification is found at tyrosine 694. Serine 722 is subject to Phosphoserine.

Belongs to the transcription factor STAT family. Forms a homodimer or a heterodimer with a related family member. Interacts with ARL2BP. Interacts with STAT1. Interacts with JUN; this complex efficiently interacts with the AP-1-related sequence of the IFN-gamma promoter. Acetylation at Lys-668 is required for JAK2-mediated phosphorylation and activation of STAT4. In terms of processing, tyrosine phosphorylated upon IL12 and IFN-alpha activation, but not by IFN-gamma in T-lymphocytes and NK cells. Serine phosphorylation is required for maximal transcriptional activity but not for DNA binding. Phosphorylation by MAP2K6 at Ser-722 is required for full transcriptional activity induced by IL12. However this serine phosphorylation is not required for cell proliferation although critical for IFN-gamma production. As to expression, expression is restricted to testis, thymus, and spleen.

It localises to the cytoplasm. Its subcellular location is the nucleus. Transcriptional regulator mainly expressed in hematopoietic cells that plays a critical role in cellular growth, differentiation and immune response. Plays a key role in the differentiation of T-helper 1 cells and the production of interferon-gamma. Also participates in multiple neutrophil functions including chemotaxis and production of the neutrophil extracellular traps. After IL12 binding to its receptor IL12RB2, STAT4 interacts with the intracellular domain of IL12RB2 and becomes tyrosine phosphorylated. Phosphorylated STAT4 then homodimerizes and migrates to the nucleus where it can recognize STAT target sequences present in IL12 responsive genes. Although IL12 appears to be the predominant activating signal, STAT4 can also be phosphorylated and activated in response to IFN-gamma stimulation via JAK1 and TYK2 and in response to different interleukins including IL23, IL2 and IL35. Transcription activation of IFN-gamma gene is mediated by interaction with JUN that forms a complex that efficiently interacts with the AP-1-related sequence of the IFN-gamma promoter. In response to IFN-alpha/beta signaling, acts as a transcriptional repressor and suppresses IL5 and IL13 mRNA expression during response to T-cell receptor (TCR) activation. The polypeptide is Signal transducer and activator of transcription 4 (Stat4) (Mus musculus (Mouse)).